Consider the following 499-residue polypeptide: Protein NODULATION SIGNALING PATHWAY 2 (499 aa).

Residues 64–106 (NNTGPAFSDHTASTTSEEEEEEEATTTTMTTTTTTTTTTPEAA) form a disordered region. Residues 88-104 (TTTTMTTTTTTTTTTPE) are compositionally biased toward low complexity. One can recognise a GRAS domain in the interval 106–491 (ADDDFKGLRL…RRLLSASLWT (386 aa)). Positions 113–182 (LRLVHLLMAG…AGGAYNSSSK (70 aa)) are leucine repeat I (LRI). The VHIID stretch occupies residues 201–265 (FQLLQDMSPY…PNGPHLRITA (65 aa)). The VHIID signature appears at 232 to 236 (VHIVD). Positions 281 to 313 (ETGRRLTAFATSLGQPFSFHHSRLESDETFRPA) are leucine repeat II (LRII). Residues 323-414 (LVFNCMLNLP…RVFLGPRIVG (92 aa)) are PFYRE. The SAW stretch occupies residues 417 to 491 (ARIYRTGGGG…RRLLSASLWT (75 aa)).

The protein belongs to the GRAS family. Interacts with IPN2. Binds to RAD1. Interacts with RAM1. In terms of tissue distribution, highly expressed in roots.

The protein localises to the nucleus membrane. The protein resides in the endoplasmic reticulum. Its function is as follows. Transcriptional regulator essential for Nod-factor-induced gene expression. Acts downstream of calcium spiking and a calcium/calmodulin-dependent protein kinase required for activation of early nodulation gene expression. Transcription factor involved in the induction of NIN and ENOD40 genes, which are required for rhizobial infection and early nodule development. Does not seem to contribute to the early steps of the arbuscular mycorrhizal fungus infection and colonization processes in roots. Transcription factor involved in the positive regulation of the beta-carotene isomerase D27, which participates in a pathway leading to biosynthesis of strigolactones in roots. The chain is Protein NODULATION SIGNALING PATHWAY 2 from Lotus japonicus (Lotus corniculatus var. japonicus).